Consider the following 279-residue polypeptide: Probable endonuclease 4 (279 aa).

Zn(2+) is bound by residues histidine 69, histidine 109, glutamate 145, aspartate 179, histidine 182, histidine 216, aspartate 229, histidine 231, and glutamate 261.

This sequence belongs to the AP endonuclease 2 family. Zn(2+) is required as a cofactor.

It catalyses the reaction Endonucleolytic cleavage to 5'-phosphooligonucleotide end-products.. Its function is as follows. Endonuclease IV plays a role in DNA repair. It cleaves phosphodiester bonds at apurinic or apyrimidinic (AP) sites, generating a 3'-hydroxyl group and a 5'-terminal sugar phosphate. The protein is Probable endonuclease 4 of Chlorobium phaeovibrioides (strain DSM 265 / 1930) (Prosthecochloris vibrioformis (strain DSM 265)).